Here is a 477-residue protein sequence, read N- to C-terminus: Argininosuccinate synthase (477 aa).

Residues 17 to 25 (AFSGGLDTS) and Ala-43 each bind ATP. Tyr-99 serves as a coordination point for L-citrulline. ATP contacts are provided by Gly-129 and Thr-131. L-aspartate is bound by residues Thr-131, Asn-135, and Asp-136. Asn-135 serves as a coordination point for L-citrulline. Asp-136 serves as a coordination point for ATP. 2 residues coordinate L-citrulline: Arg-139 and Ser-192. Asp-194 is an ATP binding site. Residues Thr-201, Glu-203, and Glu-280 each coordinate L-citrulline. The segment at 450 to 477 (DQITENPEVQAEPEEEALDAAAMEAGTD) is disordered. The segment covering 468 to 477 (DAAAMEAGTD) has biased composition (low complexity).

Belongs to the argininosuccinate synthase family. Type 2 subfamily. As to quaternary structure, homotetramer.

It is found in the cytoplasm. The catalysed reaction is L-citrulline + L-aspartate + ATP = 2-(N(omega)-L-arginino)succinate + AMP + diphosphate + H(+). It functions in the pathway amino-acid biosynthesis; L-arginine biosynthesis; L-arginine from L-ornithine and carbamoyl phosphate: step 2/3. This is Argininosuccinate synthase from Nocardioides sp. (strain ATCC BAA-499 / JS614).